A 291-amino-acid chain; its full sequence is Pirin (291 aa).

Fe cation-binding residues include His-56, His-58, His-101, and Glu-103.

This sequence belongs to the pirin family. May interact with NF1/CTF1. Interacts with BCL3. Identified in a complex comprised of PIR, BLC3, NFKB1 and target DNA. It depends on Fe cation as a cofactor.

It localises to the nucleus. The protein resides in the cytoplasm. The enzyme catalyses quercetin + O2 = 2-(3,4-dihydroxybenzoyloxy)-4,6-dihydroxybenzoate + CO. It participates in flavonoid metabolism; quercetin degradation. Its function is as follows. Transcriptional coregulator of NF-kappa-B which facilitates binding of NF-kappa-B proteins to target kappa-B genes in a redox-state-dependent manner. May be required for efficient terminal myeloid maturation of hematopoietic cells. Has quercetin 2,3-dioxygenase activity (in vitro). The chain is Pirin (Pir) from Rattus norvegicus (Rat).